Reading from the N-terminus, the 448-residue chain is Protein odr-4 homolog (448 aa).

2 helical membrane passes run 76-96 and 428-448; these read ASQLGRMLPGGLMVLGVFLMT and GLLISTVVASIAVIISFYYII.

It belongs to the ODR-4 family.

The protein localises to the membrane. In terms of biological role, may play a role in the trafficking of a subset of G-protein coupled receptors. The chain is Protein odr-4 homolog (odr4) from Xenopus tropicalis (Western clawed frog).